A 511-amino-acid chain; its full sequence is Xylose import ATP-binding protein XylG (511 aa).

2 consecutive ABC transporter domains span residues 6–244 and 261–506; these read LEMR…VGRE and FEAR…IGKP.

This sequence belongs to the ABC transporter superfamily. Xylose importer (TC 3.A.1.2.4) family. As to quaternary structure, the complex is composed of two ATP-binding proteins (XylG), two transmembrane proteins (XylH) and a solute-binding protein (XylF).

The protein resides in the cell inner membrane. It catalyses the reaction D-xylose(out) + ATP + H2O = D-xylose(in) + ADP + phosphate + H(+). In terms of biological role, part of the ABC transporter complex XylFGH involved in xylose import. Responsible for energy coupling to the transport system. The sequence is that of Xylose import ATP-binding protein XylG from Brucella melitensis biotype 1 (strain ATCC 23456 / CCUG 17765 / NCTC 10094 / 16M).